The primary structure comprises 472 residues: WAS protein family homolog DDB_G0292878 (472 aa).

Residues 279 to 472 are disordered; the sequence is LPTYDNSNSG…ESDTDSSEWE (194 aa). The span at 282–299 shows a compositional bias: polar residues; the sequence is YDNSNSGSAPVNQSSGGD. A compositionally biased stretch (low complexity) spans 300–314; sequence NNVNNNNNNNNSNNS. Pro residues predominate over residues 320–356; sequence PPQPTNAPPPPPPPPQSANAPPPPPPPPVSAPPPFNP. Over residues 363–373 the composition is skewed to acidic residues; that stretch reads NDDDDDDDDDN. The span at 374-383 shows a compositional bias: gly residues; it reads GGGGGPGGAI. Positions 382–401 constitute a WH2 domain; it reads AIGDLLADIRRGHKNRLKKA. Acidic residues predominate over residues 457-472; that stretch reads TDDQDGESDTDSSEWE.

This sequence belongs to the WASH1 family.

Functionally, acts as a nucleation-promoting factor by activating the Arp2/3 complex to induce actin polymerization. The sequence is that of WAS protein family homolog DDB_G0292878 from Dictyostelium discoideum (Social amoeba).